Here is a 330-residue protein sequence, read N- to C-terminus: D-alanine--D-alanine ligase (330 aa).

Residues 120–326 (KLWYDALGIP…FKTFLQKAVL (207 aa)) enclose the ATP-grasp domain. 150 to 205 (AFKQWGGLFVKAACQGSSVGCYKVTSEEELAQAINGAFGYSQQVLVEKAVKPRELE) contacts ATP. Residues D280, E293, and N295 each coordinate Mg(2+).

The protein belongs to the D-alanine--D-alanine ligase family. Requires Mg(2+) as cofactor. The cofactor is Mn(2+).

The protein localises to the cytoplasm. It carries out the reaction 2 D-alanine + ATP = D-alanyl-D-alanine + ADP + phosphate + H(+). Its pathway is cell wall biogenesis; peptidoglycan biosynthesis. Functionally, cell wall formation. The sequence is that of D-alanine--D-alanine ligase from Aliivibrio fischeri (strain MJ11) (Vibrio fischeri).